A 692-amino-acid polypeptide reads, in one-letter code: Elongation factor G (692 aa).

In terms of domain architecture, tr-type G spans 8 to 282 (ERTRNIGIMA…AIVYYLPSPV (275 aa)). GTP-binding positions include 17–24 (AHIDAGKT), 81–85 (DTPGH), and 135–138 (NKMD).

Belongs to the TRAFAC class translation factor GTPase superfamily. Classic translation factor GTPase family. EF-G/EF-2 subfamily.

The protein resides in the cytoplasm. Catalyzes the GTP-dependent ribosomal translocation step during translation elongation. During this step, the ribosome changes from the pre-translocational (PRE) to the post-translocational (POST) state as the newly formed A-site-bound peptidyl-tRNA and P-site-bound deacylated tRNA move to the P and E sites, respectively. Catalyzes the coordinated movement of the two tRNA molecules, the mRNA and conformational changes in the ribosome. The protein is Elongation factor G of Carboxydothermus hydrogenoformans (strain ATCC BAA-161 / DSM 6008 / Z-2901).